A 536-amino-acid chain; its full sequence is Putative beta-xylosidase (536 aa).

The active-site Proton acceptor is Asp14. Glu186 functions as the Proton donor in the catalytic mechanism.

Belongs to the glycosyl hydrolase 43 family.

The enzyme catalyses Hydrolysis of (1-&gt;4)-beta-D-xylans, to remove successive D-xylose residues from the non-reducing termini.. The polypeptide is Putative beta-xylosidase (yagH) (Escherichia coli (strain K12)).